The following is a 401-amino-acid chain: MTTLGTPLSPSATKVMLLGSGELGKEVLIALQRLGVETIAVDRYDNAPGQQVAHHARTIAMSDPDQLKALIEAEKPHLVVPEIEAIATPMLETLEAAGTVRVIPTARAARLTMDREGIRRLAAESLGLPTSPYKFCDSLEELQAAIDGGIGYPCVVKPVMSSSGKGQSKIDGPEGVKAAWDYAMAGGRVSHGRVIVEGFIDFDYEITLLTVRAIGASGQVETRFCAPIGHVQVSGDYVESWQPQPMHPAALASAQRIAQAVTADLGGMGLFGVELFVKGEQVWFSEVSPRPHDTGMVTMATQWQNEFELHARAILGLPVDTTLRSPGASAVIYGGVEAQGVVFDGVDQALRVPQTEVRLFGKPESFARRRMGVALAYADDIDTARTRAKEAASRVRPRAVG.

Residues E22–L23 and E82 each bind N(1)-(5-phospho-beta-D-ribosyl)glycinamide. ATP is bound by residues R115, K157, S162–Q167, E197–I200, and E205. In terms of domain architecture, ATP-grasp spans R120–L315. Mg(2+) contacts are provided by E274 and E286. N(1)-(5-phospho-beta-D-ribosyl)glycinamide contacts are provided by residues D293, K362, and R369–R370.

Belongs to the PurK/PurT family. Homodimer.

The enzyme catalyses N(1)-(5-phospho-beta-D-ribosyl)glycinamide + formate + ATP = N(2)-formyl-N(1)-(5-phospho-beta-D-ribosyl)glycinamide + ADP + phosphate + H(+). The protein operates within purine metabolism; IMP biosynthesis via de novo pathway; N(2)-formyl-N(1)-(5-phospho-D-ribosyl)glycinamide from N(1)-(5-phospho-D-ribosyl)glycinamide (formate route): step 1/1. Involved in the de novo purine biosynthesis. Catalyzes the transfer of formate to 5-phospho-ribosyl-glycinamide (GAR), producing 5-phospho-ribosyl-N-formylglycinamide (FGAR). Formate is provided by PurU via hydrolysis of 10-formyl-tetrahydrofolate. This Cupriavidus taiwanensis (strain DSM 17343 / BCRC 17206 / CCUG 44338 / CIP 107171 / LMG 19424 / R1) (Ralstonia taiwanensis (strain LMG 19424)) protein is Formate-dependent phosphoribosylglycinamide formyltransferase.